Reading from the N-terminus, the 1578-residue chain is Bromodomain-containing protein DDB_G0270170 (1578 aa).

A compositionally biased stretch (acidic residues) spans 1 to 12; that stretch reads MSLEQQDETVVE. 4 disordered regions span residues 1–39, 108–127, 151–285, and 319–454; these read MSLEQQDETVVEEETKTSFETNNSTANNTNNNTDNTYKE, NNNNGDENNKDIHDSSNNTE, HYSD…AKEL, and NENI…TTQT. Positions 18 to 35 are enriched in low complexity; that stretch reads SFETNNSTANNTNNNTDN. The segment covering 152-163 has biased composition (basic and acidic residues); it reads YSDDESSKEKQD. Composition is skewed to low complexity over residues 164–185 and 197–231; these read NINSNNNNNKNKNEQIINSENI and TTPSDTPPTLTNNTSSTTTTTTTNNTTTAATTTTN. Composition is skewed to polar residues over residues 319–332 and 340–351; these read NENIFSSSRKSTTK and TASTTNTPIITA. Low complexity predominate over residues 352-383; the sequence is QQNTTPLSPTQTTTTTTTPTTTTAQQNTPAQT. The span at 384 to 395 shows a compositional bias: polar residues; the sequence is ESKPPTTISINI. Composition is skewed to low complexity over residues 396–407 and 417–433; these read KGSKSPKTTGGK and VVISQPVVPSTPVVATT. Positions 443–454 are enriched in polar residues; that stretch reads STANNNSETTQT. A coiled-coil region spans residues 479–506; it reads SDSATIQQLQQSISMLEDKIRLISSNNK. Disordered stretches follow at residues 543–565 and 580–730; these read FTKSSTLAPPSSERKYSNLYSDD and IPIP…RMGK. Low complexity-rich tracts occupy residues 604–653 and 660–686; these read NTST…PPQQ and TQQENTSSTTTTTTTTTTTTNTEDTTT. Residues 735 to 841 form the Bromo domain; that stretch reads VVLTPVFKRC…DVFEKGFPKV (107 aa). The stretch at 851-903 forms a coiled coil; the sequence is KNVDQEKIEKLSNDLKNVTKELEKFKKDDSNSINNNNNNNNNYNNNNNNNNNN. Disordered stretches follow at residues 874 to 969, 1039 to 1167, 1184 to 1452, and 1480 to 1544; these read KFKK…KVTT, HALP…NNNN, SIPE…TDSA, and EREE…KGNM. 3 stretches are compositionally biased toward low complexity: residues 881–911, 918–961, and 1047–1061; these read NSINNNNNNNNNYNNNNNNNNNNSSSSSSRS, SSGS…SSNN, and SSTHSSHSSSHDSSS. In terms of domain architecture, NET spans 957-1039; the sequence is SSSNNKKYPK…QYKNGEIPQH (83 aa). Over residues 1064 to 1077 the composition is skewed to basic and acidic residues; it reads REIEKLQKQLDRLG. The segment covering 1092 to 1107 has biased composition (basic residues); the sequence is HSKRISKPISKARGRK. Positions 1112 to 1167 are enriched in low complexity; the sequence is SSSNLNNSSNNINNNNNNINNYNNNNNYNNNNNNNLNNNNNNNINSNLNNNLNNNN. Residues 1113–1150 adopt a coiled-coil conformation; it reads SSNLNNSSNNINNNNNNINNYNNNNNYNNNNNNNLNNN. Acidic residues predominate over residues 1192–1204; it reads TDISESSDSESDS. Low complexity-rich tracts occupy residues 1205-1218 and 1231-1334; these read ESGSSDSSSSYSDS and YNNS…SLTN. Residues 1280 to 1308 are a coiled coil; the sequence is NSNNNNSNNNNNNVNNNNNNHNNNNHNNN. Positions 1356-1369 are enriched in polar residues; it reads SVASWSFDPTNNKE. Over residues 1370–1386 the composition is skewed to low complexity; sequence SSSSSSTSSTSSTSNTT. Positions 1387-1399 are enriched in polar residues; it reads LTPIIQQSSLTHA. Low complexity-rich tracts occupy residues 1400 to 1424 and 1432 to 1451; these read SSPISSSTFVSFSSSSSTPPTNNLS and NSPSINSPSSPSANNNNTDS. Residues 1462–1544 are a coiled coil; that stretch reads TLKQKEKERV…EKLNNSKGNM (83 aa). Basic and acidic residues predominate over residues 1480–1538; it reads EREEKEEELKKEEEKKRIEMEEIKRLAKEKEEREAEETRKQIESERAAAREAREKEKLN.

This is Bromodomain-containing protein DDB_G0270170 from Dictyostelium discoideum (Social amoeba).